Here is a 77-residue protein sequence, read N- to C-terminus: uncharacterized protein (77 aa).

Residues 5 to 74 (SYIVQLKDSV…FEPDQEMHTM (70 aa)) form the Inhibitor I9 domain.

It belongs to the protease inhibitor I9 family.

It is found in the cytoplasm. It localises to the nucleus. This is an uncharacterized protein from Schizosaccharomyces pombe (strain 972 / ATCC 24843) (Fission yeast).